A 341-amino-acid chain; its full sequence is Probable long-chain-alcohol O-fatty-acyltransferase 9 (341 aa).

7 helical membrane-spanning segments follow: residues 9 to 29 (IIVW…SANI), 36 to 56 (LFSV…FSSV), 82 to 102 (GPLF…CFPI), 122 to 142 (FAIK…SHFL), 146 to 166 (VLLS…LGPL), 231 to 251 (MGYL…YFYI), and 295 to 315 (RLLT…PLFI).

Belongs to the wax synthase family.

It is found in the membrane. It carries out the reaction a long chain fatty alcohol + a fatty acyl-CoA = a wax ester + CoA. Catalyzes the final step in the synthesis of long-chain linear esters (waxes). The sequence is that of Probable long-chain-alcohol O-fatty-acyltransferase 9 from Arabidopsis thaliana (Mouse-ear cress).